The chain runs to 496 residues: NADH-quinone oxidoreductase subunit N (496 aa).

A run of 14 helical transmembrane segments spans residues 8-28 (LLSTEIIMAVLGLGLFAVGLI), 37-57 (MFPLTLFALLGTLAYAVYDFF), 73-93 (QFAGFFKILFLVAALLVVLST), 110-130 (LLLLAALGMMLMAGAGDLLTM), 131-151 (YVGLELMTITFYILVAYHPND), 162-182 (LVLGAASSAVLLYGISLIYGL), 203-223 (TILATVMMLAGFGFKISLVPF), 235-255 (PAPITAFLATASKAAGFAALV), 271-291 (GLILLLVLAAITMIIGNLMAF), 300-320 (MAYSGIAQAGYIIVGVIAVSI), 341-361 (GVLFYLMIYVFANLGAFAVIT), 386-406 (AAVLTLSVLSLAGIPPLAGFV), 421-441 (VWIAVIGFVMSMISVYYYLSI), and 464-484 (FGMIFSMIVTIVLGIYPTPLA).

Belongs to the complex I subunit 2 family. In terms of assembly, NDH-1 is composed of 14 different subunits. Subunits NuoA, H, J, K, L, M, N constitute the membrane sector of the complex.

It localises to the cell membrane. The enzyme catalyses a quinone + NADH + 5 H(+)(in) = a quinol + NAD(+) + 4 H(+)(out). In terms of biological role, NDH-1 shuttles electrons from NADH, via FMN and iron-sulfur (Fe-S) centers, to quinones in the respiratory chain. The immediate electron acceptor for the enzyme in this species is believed to be a menaquinone. Couples the redox reaction to proton translocation (for every two electrons transferred, four hydrogen ions are translocated across the cytoplasmic membrane), and thus conserves the redox energy in a proton gradient. This Desulfitobacterium hafniense (strain DSM 10664 / DCB-2) protein is NADH-quinone oxidoreductase subunit N.